Consider the following 569-residue polypeptide: MLEPIAYDIGRLCKEEDKELTPKLIDIDVIGLSQEKIFYGIMTPFRCPNSKSIYELRKSYVKADGIKMPFDTFRELTSIFKKSFIGTVKYKGNVFKYQILNFGKHVDLIELEDADLYIIADGRRLIERKELQIIPKIREKISPNSAIYSPAVFPWEIPLLAYIGVDYFDDSLAKLYASMGYKFTKNRAVKVDSFSFEELYNNNKKVYEEILEEVRIAIKNGFLRNVVEETAVSHPYLWANYRRYEPDLRNIPLSKENKIIVTTNINIPEVKKYLERLDNYEPYSNIIVLLPCSSKKPYSISQSHQKFIKAIKSAKVVVEEVILTSPYGLVPRALERLVNYDIPVTGEWSFEEIELINNCLKNFLKKVKEKFDDYIVIAHLPEHYLEILELDDIVITSKGNPTSEEALKNLTDTLKKYKELTKSKDINKKGQRIHNIQQLAEFQFGINFIPNEIFINHKGQIFTKINNKNQQIASINPKNGLLILTLSGGELLWNSGGKDINYIEVNYEIKKGSLFPPGFVDCNENISYNDEVVLIKDDTFLGIGRALMSGFEMKKAKHGALVNIRNVKS.

A PUA domain is found at 495–569; it reads SGGKDINYIE…ALVNIRNVKS (75 aa).

The protein belongs to the archaeosine synthase type 1 family. In terms of assembly, homodimer.

The catalysed reaction is 7-cyano-7-carbaguanosine(15) in tRNA + L-glutamine + H2O = archaeosine(15) in tRNA + L-glutamate. Its pathway is tRNA modification; archaeosine-tRNA biosynthesis. Is responsible for the final step in the biosynthesis of archaeosine, a modified nucleoside present in the dihydrouridine loop (D-loop) of archaeal tRNA. Catalyzes the conversion of 7-cyano-7-deazaguanine (preQ0)-modified tRNA to archaeosine-tRNA, transforming a nitrile group to a formamidine group. Can use either glutamine, asparagine or ammonium as amino donor. The chain is Archaeosine synthase from Methanocaldococcus jannaschii (strain ATCC 43067 / DSM 2661 / JAL-1 / JCM 10045 / NBRC 100440) (Methanococcus jannaschii).